The sequence spans 368 residues: Ferrochelatase (368 aa).

Histidine 209 and glutamate 290 together coordinate Fe cation.

It belongs to the ferrochelatase family.

The protein resides in the cytoplasm. It catalyses the reaction heme b + 2 H(+) = protoporphyrin IX + Fe(2+). The protein operates within porphyrin-containing compound metabolism; protoheme biosynthesis; protoheme from protoporphyrin-IX: step 1/1. Its function is as follows. Catalyzes the ferrous insertion into protoporphyrin IX. The polypeptide is Ferrochelatase (Herminiimonas arsenicoxydans).